A 237-amino-acid chain; its full sequence is Undecaprenyl-diphosphatase (237 aa).

7 helical membrane passes run 38–58 (QTAV…LDGI), 65–85 (WRII…GVLF), 92–112 (LFSS…ILMF), 126–146 (MSFL…FPGI), 166–186 (ALQY…ILGL), 191–211 (VTIL…YVLS), and 217–237 (GKIW…YLAG).

This sequence belongs to the UppP family.

It localises to the cell inner membrane. It catalyses the reaction di-trans,octa-cis-undecaprenyl diphosphate + H2O = di-trans,octa-cis-undecaprenyl phosphate + phosphate + H(+). Functionally, catalyzes the dephosphorylation of undecaprenyl diphosphate (UPP). Confers resistance to bacitracin. This Thermotoga maritima (strain ATCC 43589 / DSM 3109 / JCM 10099 / NBRC 100826 / MSB8) protein is Undecaprenyl-diphosphatase.